The following is a 79-amino-acid chain: MAQQRRGGFKRRKKVDYIAANKIEYVDYKDTELLSRFVSERGKILPRRVTGTSAKNQRKVTXAIKRARVMALMPFVNED.

The protein belongs to the bacterial ribosomal protein bS18 family. As to quaternary structure, part of the 30S ribosomal subunit. Forms a tight heterodimer with protein bS6.

Its function is as follows. Binds as a heterodimer with protein bS6 to the central domain of the 16S rRNA, where it helps stabilize the platform of the 30S subunit. In Streptococcus pneumoniae serotype 19F (strain G54), this protein is Small ribosomal subunit protein bS18.